The following is a 607-amino-acid chain: Zinc finger protein 750 (607 aa).

The segment at 25-51 (YQCFQCPFTCNIKSHLFNHMKYNLCKN) adopts a CCHC-type zinc-finger fold. Zn(2+) is bound by residues Cys-27, Cys-30, His-43, and Cys-49. Positions 60–78 (MEQTGKASRASQHSPAFSH) are enriched in polar residues. 4 disordered regions span residues 60 to 133 (MEQT…DKSE), 318 to 467 (RAVQ…SSQE), 482 to 511 (QALP…QDLE), and 575 to 607 (GQKR…SQNC). Composition is skewed to basic and acidic residues over residues 79–133 (NSKE…DKSE) and 318–334 (RAVQ…RESP). Residues 369-380 (HSGSQSHIISGS) show a composition bias toward low complexity. A compositionally biased stretch (acidic residues) spans 421–432 (DKEEDEETEEEI). The span at 452-462 (HYPDRELHYDS) shows a compositional bias: basic and acidic residues. Residues 496–507 (ISNAEVSTTESP) show a composition bias toward polar residues. Positions 579 to 592 (ANNRPLRHTNKRAK) are enriched in basic residues.

The protein localises to the nucleus. Transcription factor involved in epidermis differentiation. The polypeptide is Zinc finger protein 750 (znf750) (Danio rerio (Zebrafish)).